A 531-amino-acid chain; its full sequence is T-complex protein 1 subunit zeta (531 aa).

Position 2 is an N-acetylalanine (alanine 2). Residue lysine 5 is modified to N6-acetyllysine. Residue glycine 39 coordinates ADP. Glycine 39 contributes to the ATP binding site. Residue aspartate 90 participates in Mg(2+) binding. ADP is bound by residues glycine 91, threonine 92, threonine 93, serine 94, threonine 158, and lysine 159. ATP is bound by residues glycine 91, threonine 92, and threonine 93. Residue lysine 199 is modified to N6-acetyllysine. Serine 205 is subject to Phosphoserine. A Glycyl lysine isopeptide (Lys-Gly) (interchain with G-Cter in SUMO2) cross-link involves residue lysine 251. Residues lysine 287, lysine 365, lysine 377, and lysine 388 each carry the N6-acetyllysine modification. Alanine 411 is a binding site for ADP. Residues alanine 411, glycine 412, aspartate 496, and lysine 501 each coordinate ATP. Aspartate 496 provides a ligand contact to ADP.

The protein belongs to the TCP-1 chaperonin family. Component of the chaperonin-containing T-complex (TRiC), a hexadecamer composed of two identical back-to-back stacked rings enclosing a protein folding chamber. Each ring is made up of eight different subunits: TCP1/CCT1, CCT2, CCT3, CCT4, CCT5, CCT6A/CCT6, CCT7, CCT8. Interacts with PACRG.

It is found in the cytoplasm. It catalyses the reaction ATP + H2O = ADP + phosphate + H(+). In terms of biological role, component of the chaperonin-containing T-complex (TRiC), a molecular chaperone complex that assists the folding of actin, tubulin and other proteins upon ATP hydrolysis. The TRiC complex mediates the folding of WRAP53/TCAB1, thereby regulating telomere maintenance. The polypeptide is T-complex protein 1 subunit zeta (CCT6) (Pongo abelii (Sumatran orangutan)).